An 85-amino-acid polypeptide reads, in one-letter code: Large ribosomal subunit protein bL27 (85 aa).

Residues 1–22 (MAHKKAGGSSRNGRDSESKRLG) are disordered.

Belongs to the bacterial ribosomal protein bL27 family.

The protein is Large ribosomal subunit protein bL27 of Tolumonas auensis (strain DSM 9187 / NBRC 110442 / TA 4).